The following is a 419-amino-acid chain: UDP-N-acetylglucosamine 1-carboxyvinyltransferase (419 aa).

Phosphoenolpyruvate is bound at residue 22 to 23; that stretch reads KN. Residue Arg-91 coordinates UDP-N-acetyl-alpha-D-glucosamine. Cys-115 acts as the Proton donor in catalysis. The residue at position 115 (Cys-115) is a 2-(S-cysteinyl)pyruvic acid O-phosphothioketal. Residues 120–124, 160–163, Asp-305, and Val-327 each bind UDP-N-acetyl-alpha-D-glucosamine; these read RPVDL and KVSV.

Belongs to the EPSP synthase family. MurA subfamily.

The protein localises to the cytoplasm. The catalysed reaction is phosphoenolpyruvate + UDP-N-acetyl-alpha-D-glucosamine = UDP-N-acetyl-3-O-(1-carboxyvinyl)-alpha-D-glucosamine + phosphate. It functions in the pathway cell wall biogenesis; peptidoglycan biosynthesis. Functionally, cell wall formation. Adds enolpyruvyl to UDP-N-acetylglucosamine. The chain is UDP-N-acetylglucosamine 1-carboxyvinyltransferase from Escherichia coli O157:H7.